The primary structure comprises 92 residues: N(2)-fixation sustaining protein CowN (92 aa).

It belongs to the CowN family.

Functionally, is required to sustain N(2)-dependent growth in the presence of low levels of carbon monoxide (CO). Probably acts by protecting the N(2) fixation ability of the nitrogenase complex, which is inactivated in the presence of CO. The protein is N(2)-fixation sustaining protein CowN of Cereibacter sphaeroides (strain KD131 / KCTC 12085) (Rhodobacter sphaeroides).